The primary structure comprises 156 residues: Small ribosomal subunit protein uS7 (156 aa).

This sequence belongs to the universal ribosomal protein uS7 family. In terms of assembly, part of the 30S ribosomal subunit. Contacts proteins S9 and S11.

One of the primary rRNA binding proteins, it binds directly to 16S rRNA where it nucleates assembly of the head domain of the 30S subunit. Is located at the subunit interface close to the decoding center, probably blocks exit of the E-site tRNA. This is Small ribosomal subunit protein uS7 from Pseudomonas fluorescens (strain SBW25).